A 1080-amino-acid polypeptide reads, in one-letter code: DNA-directed RNA polymerase subunit beta C-terminal section (1080 aa).

This sequence belongs to the RNA polymerase beta chain family. In terms of assembly, in plastids the minimal PEP RNA polymerase catalytic core is composed of four subunits: alpha, beta, beta', and beta''. When a (nuclear-encoded) sigma factor is associated with the core the holoenzyme is formed, which can initiate transcription.

It is found in the plastid. Its subcellular location is the chloroplast. It catalyses the reaction RNA(n) + a ribonucleoside 5'-triphosphate = RNA(n+1) + diphosphate. Functionally, DNA-dependent RNA polymerase catalyzes the transcription of DNA into RNA using the four ribonucleoside triphosphates as substrates. This Stigeoclonium helveticum (Green alga) protein is DNA-directed RNA polymerase subunit beta C-terminal section (rpoB2).